The chain runs to 140 residues: ATP synthase epsilon chain (140 aa).

This sequence belongs to the ATPase epsilon chain family. F-type ATPases have 2 components, CF(1) - the catalytic core - and CF(0) - the membrane proton channel. CF(1) has five subunits: alpha(3), beta(3), gamma(1), delta(1), epsilon(1). CF(0) has three main subunits: a, b and c.

It is found in the cell inner membrane. Functionally, produces ATP from ADP in the presence of a proton gradient across the membrane. The polypeptide is ATP synthase epsilon chain (Pseudoalteromonas translucida (strain TAC 125)).